A 352-amino-acid polypeptide reads, in one-letter code: Ion-translocating oxidoreductase complex subunit D (352 aa).

4 consecutive transmembrane segments (helical) span residues I20–G40, G42–L62, V69–P91, and P123–L143. At T187 the chain carries FMN phosphoryl threonine. 5 consecutive transmembrane segments (helical) span residues L215–L235, W242–F262, L267–L287, L301–P321, and D322–T342.

It belongs to the NqrB/RnfD family. In terms of assembly, the complex is composed of six subunits: RsxA, RsxB, RsxC, RsxD, RsxE and RsxG. FMN is required as a cofactor.

It localises to the cell inner membrane. In terms of biological role, part of a membrane-bound complex that couples electron transfer with translocation of ions across the membrane. Required to maintain the reduced state of SoxR. The polypeptide is Ion-translocating oxidoreductase complex subunit D (Salmonella paratyphi A (strain ATCC 9150 / SARB42)).